We begin with the raw amino-acid sequence, 699 residues long: SPX domain-containing membrane protein At4g22990 (699 aa).

An SPX domain is found at 2–145 (VAFGKKLKER…GYRFTNYYVK (144 aa)). Helical transmembrane passes span 249-269 (FMSL…TYII), 280-300 (LGAA…AQLF), 317-337 (LIFS…AFDF), 339-358 (SIAV…ARAV), 377-397 (AGFV…AGLL), and 413-433 (LPGW…AISF). Over residues 475 to 490 (IEEQGEDECDGSEEAS) the composition is skewed to acidic residues. Residues 475-494 (IEEQGEDECDGSEEASEDSR) are disordered. A run of 5 helical transmembrane segments spans residues 515–535 (LLIY…SSVI), 546–566 (SVAI…LVVG), 578–598 (ILLV…HVVV), 606–626 (VCSG…NLSL), and 671–691 (MLLN…IVAT).

It belongs to the major facilitator superfamily.

It is found in the membrane. The sequence is that of SPX domain-containing membrane protein At4g22990 from Arabidopsis thaliana (Mouse-ear cress).